Consider the following 456-residue polypeptide: Bifunctional protein GlmU (456 aa).

Residues 1–229 (MSSHAMSVVI…LSEVEGVNNR (229 aa)) form a pyrophosphorylase region. UDP-N-acetyl-alpha-D-glucosamine contacts are provided by residues 11 to 14 (LAAG), Lys25, Gln76, 81 to 82 (GT), 103 to 105 (YGD), Gly140, Glu154, Asn169, and Asn227. Asp105 contacts Mg(2+). Asn227 provides a ligand contact to Mg(2+). The segment at 230 to 250 (LQLARLEHVYQAEQAEKLLLA) is linker. The interval 251–456 (GVMLRDPARF…QGWRRPVKKK (206 aa)) is N-acetyltransferase. UDP-N-acetyl-alpha-D-glucosamine contacts are provided by Arg333 and Lys351. The active-site Proton acceptor is the His363. 2 residues coordinate UDP-N-acetyl-alpha-D-glucosamine: Tyr366 and Asn377. Acetyl-CoA-binding positions include Ala380, 386–387 (NY), Ser405, Ala423, and Arg440.

This sequence in the N-terminal section; belongs to the N-acetylglucosamine-1-phosphate uridyltransferase family. It in the C-terminal section; belongs to the transferase hexapeptide repeat family. Homotrimer. Requires Mg(2+) as cofactor.

The protein resides in the cytoplasm. It catalyses the reaction alpha-D-glucosamine 1-phosphate + acetyl-CoA = N-acetyl-alpha-D-glucosamine 1-phosphate + CoA + H(+). The enzyme catalyses N-acetyl-alpha-D-glucosamine 1-phosphate + UTP + H(+) = UDP-N-acetyl-alpha-D-glucosamine + diphosphate. It participates in nucleotide-sugar biosynthesis; UDP-N-acetyl-alpha-D-glucosamine biosynthesis; N-acetyl-alpha-D-glucosamine 1-phosphate from alpha-D-glucosamine 6-phosphate (route II): step 2/2. Its pathway is nucleotide-sugar biosynthesis; UDP-N-acetyl-alpha-D-glucosamine biosynthesis; UDP-N-acetyl-alpha-D-glucosamine from N-acetyl-alpha-D-glucosamine 1-phosphate: step 1/1. It functions in the pathway bacterial outer membrane biogenesis; LPS lipid A biosynthesis. In terms of biological role, catalyzes the last two sequential reactions in the de novo biosynthetic pathway for UDP-N-acetylglucosamine (UDP-GlcNAc). The C-terminal domain catalyzes the transfer of acetyl group from acetyl coenzyme A to glucosamine-1-phosphate (GlcN-1-P) to produce N-acetylglucosamine-1-phosphate (GlcNAc-1-P), which is converted into UDP-GlcNAc by the transfer of uridine 5-monophosphate (from uridine 5-triphosphate), a reaction catalyzed by the N-terminal domain. The protein is Bifunctional protein GlmU of Cronobacter sakazakii (strain ATCC BAA-894) (Enterobacter sakazakii).